The primary structure comprises 329 residues: UDP-glucose 4-epimerase (329 aa).

NAD(+)-binding positions include 11–12, 31–36, 51–52, 71–75, Thr115, Tyr139, Lys143, and Phe167; these read YV, DNFSTG, DV, and FAARS. Positions 115 and 139 each coordinate substrate. Catalysis depends on Tyr139, which acts as the Proton acceptor. Substrate contacts are provided by residues Asn168, 185–186, 202–204, Arg217, and 277–280; these read HL, FMF, and RAGD.

It belongs to the NAD(P)-dependent epimerase/dehydratase family. In terms of assembly, homodimer. It depends on NAD(+) as a cofactor.

The catalysed reaction is UDP-alpha-D-glucose = UDP-alpha-D-galactose. The protein operates within carbohydrate metabolism; galactose metabolism. Involved in the metabolism of galactose. Catalyzes the conversion of UDP-galactose (UDP-Gal) to UDP-glucose (UDP-Glc) through a mechanism involving the transient reduction of NAD. In Corynebacterium glutamicum (strain ATCC 13032 / DSM 20300 / JCM 1318 / BCRC 11384 / CCUG 27702 / LMG 3730 / NBRC 12168 / NCIMB 10025 / NRRL B-2784 / 534), this protein is UDP-glucose 4-epimerase (galE).